Consider the following 471-residue polypeptide: Tigger transposable element-derived protein 3 (471 aa).

In terms of domain architecture, HTH psq-type spans 3 to 55 (LSSKKKLHALSLAEKIQVLELLDESKMSQSEVARRFQVSQPQISRICKNKEKL). 2 consecutive DNA-binding regions (H-T-H motif) follow at residues 31 to 51 (QSEV…ICKN) and 100 to 130 (PMLL…WKRR). Positions 67-137 (ERKRKRESKY…KRRNNVGFGA (71 aa)) constitute an HTH CENPB-type domain. Residues 167–360 (FSPEDVFGCA…VPPQLIFSSF (194 aa)) enclose the DDE-1 domain.

Belongs to the tigger transposable element derived protein family.

Its subcellular location is the nucleus. This Homo sapiens (Human) protein is Tigger transposable element-derived protein 3 (TIGD3).